We begin with the raw amino-acid sequence, 66 residues long: ATP synthase F(0) complex subunit 8 (66 aa).

Residues 8–24 (IWLLAVVIVLTTLMIFL) traverse the membrane as a helical segment. Lys54 is subject to N6-acetyllysine; alternate. Lys54 carries the post-translational modification N6-succinyllysine; alternate. At Lys57 the chain carries N6-acetyllysine.

It belongs to the ATPase protein 8 family. As to quaternary structure, component of the ATP synthase complex composed at least of ATP5F1A/subunit alpha, ATP5F1B/subunit beta, ATP5MC1/subunit c (homooctomer), MT-ATP6/subunit a, MT-ATP8/subunit 8, ATP5ME/subunit e, ATP5MF/subunit f, ATP5MG/subunit g, ATP5MK/subunit k, ATP5MJ/subunit j, ATP5F1C/subunit gamma, ATP5F1D/subunit delta, ATP5F1E/subunit epsilon, ATP5PF/subunit F6, ATP5PB/subunit b, ATP5PD/subunit d, ATP5PO/subunit OSCP. ATP synthase complex consists of a soluble F(1) head domain (subunits alpha(3) and beta(3)) - the catalytic core - and a membrane F(0) domain - the membrane proton channel (subunits c, a, 8, e, f, g, k and j). These two domains are linked by a central stalk (subunits gamma, delta, and epsilon) rotating inside the F1 region and a stationary peripheral stalk (subunits F6, b, d, and OSCP). Interacts with PRICKLE3.

The protein localises to the mitochondrion membrane. Functionally, subunit 8, of the mitochondrial membrane ATP synthase complex (F(1)F(0) ATP synthase or Complex V) that produces ATP from ADP in the presence of a proton gradient across the membrane which is generated by electron transport complexes of the respiratory chain. ATP synthase complex consist of a soluble F(1) head domain - the catalytic core - and a membrane F(1) domain - the membrane proton channel. These two domains are linked by a central stalk rotating inside the F(1) region and a stationary peripheral stalk. During catalysis, ATP synthesis in the catalytic domain of F(1) is coupled via a rotary mechanism of the central stalk subunits to proton translocation. In vivo, can only synthesize ATP although its ATP hydrolase activity can be activated artificially in vitro. Part of the complex F(0) domain. The sequence is that of ATP synthase F(0) complex subunit 8 from Mammuthus primigenius (Siberian woolly mammoth).